A 355-amino-acid polypeptide reads, in one-letter code: Cobalt-precorrin-5B C(1)-methyltransferase (355 aa).

The protein belongs to the CbiD family.

It catalyses the reaction Co-precorrin-5B + S-adenosyl-L-methionine = Co-precorrin-6A + S-adenosyl-L-homocysteine. The protein operates within cofactor biosynthesis; adenosylcobalamin biosynthesis; cob(II)yrinate a,c-diamide from sirohydrochlorin (anaerobic route): step 6/10. Functionally, catalyzes the methylation of C-1 in cobalt-precorrin-5B to form cobalt-precorrin-6A. The chain is Cobalt-precorrin-5B C(1)-methyltransferase from Sulfolobus acidocaldarius (strain ATCC 33909 / DSM 639 / JCM 8929 / NBRC 15157 / NCIMB 11770).